The primary structure comprises 76 residues: U-scoloptoxin(13)-Sm1a (76 aa).

The signal sequence occupies residues 1–22 (MAYICAXTLAFLLCVNTGIIQA).

This sequence belongs to the scoloptoxin-13 family. Post-translationally, contains 4 disulfide bonds. In terms of tissue distribution, expressed by the venom gland.

It is found in the secreted. The sequence is that of U-scoloptoxin(13)-Sm1a from Scolopendra morsitans (Tanzanian blue ringleg centipede).